A 181-amino-acid polypeptide reads, in one-letter code: Transcription termination/antitermination protein NusG (181 aa).

A KOW domain is found at 130 to 161 (PGEMVRVNDGPFADFNGVVEEVDYEKSRLKVS).

It belongs to the NusG family. Monomer. Interacts with the transcription termination factor Rho and with RNA polymerase.

Functionally, participates in transcription elongation, termination and antitermination. In the absence of Rho, increases the rate of transcription elongation by the RNA polymerase (RNAP), probably by partially suppressing pausing. In the presence of Rho, modulates most Rho-dependent termination events by interacting with the RNAP to render the complex more susceptible to the termination activity of Rho. May be required to overcome a kinetic limitation of Rho to function at certain terminators. Also involved in ribosomal RNA transcriptional antitermination. The chain is Transcription termination/antitermination protein NusG from Salmonella typhi.